Reading from the N-terminus, the 133-residue chain is Small ribosomal subunit protein uS8 (133 aa).

This sequence belongs to the universal ribosomal protein uS8 family. In terms of assembly, part of the 30S ribosomal subunit. Contacts proteins S5 and S12.

Functionally, one of the primary rRNA binding proteins, it binds directly to 16S rRNA central domain where it helps coordinate assembly of the platform of the 30S subunit. The polypeptide is Small ribosomal subunit protein uS8 (Synechococcus sp. (strain CC9605)).